The sequence spans 165 residues: Ureidoglycolate lyase (165 aa).

The protein belongs to the ureidoglycolate lyase family. Homodimer. It depends on Ni(2+) as a cofactor.

It carries out the reaction (S)-ureidoglycolate = urea + glyoxylate. The protein operates within nitrogen metabolism; (S)-allantoin degradation. In terms of biological role, catalyzes the catabolism of the allantoin degradation intermediate (S)-ureidoglycolate, generating urea and glyoxylate. Involved in the utilization of allantoin as nitrogen source. This is Ureidoglycolate lyase from Chelativorans sp. (strain BNC1).